Consider the following 239-residue polypeptide: Purine nucleoside phosphorylase DeoD-type (239 aa).

Position 5 (H5) interacts with a purine D-ribonucleoside. Residues G21, R25, R44, and 88-91 (RVGS) contribute to the phosphate site. Residues 180 to 182 (EME) and 204 to 205 (SD) contribute to the a purine D-ribonucleoside site. D205 serves as the catalytic Proton donor.

Belongs to the PNP/UDP phosphorylase family. Homohexamer; trimer of homodimers.

It catalyses the reaction a purine D-ribonucleoside + phosphate = a purine nucleobase + alpha-D-ribose 1-phosphate. The enzyme catalyses a purine 2'-deoxy-D-ribonucleoside + phosphate = a purine nucleobase + 2-deoxy-alpha-D-ribose 1-phosphate. Catalyzes the reversible phosphorolytic breakdown of the N-glycosidic bond in the beta-(deoxy)ribonucleoside molecules, with the formation of the corresponding free purine bases and pentose-1-phosphate. The sequence is that of Purine nucleoside phosphorylase DeoD-type from Salmonella heidelberg (strain SL476).